A 457-amino-acid chain; its full sequence is Karyogamy meiotic segregation protein 2 (457 aa).

Position 134 is a phosphoserine (S134).

Interacts with sad1.

It localises to the cytoplasm. The protein resides in the cytoskeleton. It is found in the microtubule organizing center. Its subcellular location is the spindle pole body. This is Karyogamy meiotic segregation protein 2 (kms2) from Schizosaccharomyces pombe (strain 972 / ATCC 24843) (Fission yeast).